Consider the following 423-residue polypeptide: uncharacterized protein (423 aa).

It belongs to the mycobacterial PPE family.

Functionally, could be required for host endothelial-cell invasion and/or intracellular survival. This is an uncharacterized protein from Mycobacterium tuberculosis (strain CDC 1551 / Oshkosh).